The chain runs to 257 residues: Ribonuclease HII (257 aa).

The RNase H type-2 domain occupies 72-257; that stretch reads TYIAGIDEVG…FAPIKDMIQK (186 aa). Asp78, Glu79, and Asp170 together coordinate a divalent metal cation.

The protein belongs to the RNase HII family. Requires Mn(2+) as cofactor. The cofactor is Mg(2+).

Its subcellular location is the cytoplasm. It catalyses the reaction Endonucleolytic cleavage to 5'-phosphomonoester.. In terms of biological role, endonuclease that specifically degrades the RNA of RNA-DNA hybrids. The sequence is that of Ribonuclease HII from Bacillus cereus (strain B4264).